Reading from the N-terminus, the 192-residue chain is Peptidyl-tRNA hydrolase (192 aa).

Tyrosine 17 lines the tRNA pocket. The Proton acceptor role is filled by histidine 22. TRNA is bound by residues tyrosine 68, asparagine 70, and asparagine 116.

The protein belongs to the PTH family. Monomer.

It localises to the cytoplasm. The catalysed reaction is an N-acyl-L-alpha-aminoacyl-tRNA + H2O = an N-acyl-L-amino acid + a tRNA + H(+). Hydrolyzes ribosome-free peptidyl-tRNAs (with 1 or more amino acids incorporated), which drop off the ribosome during protein synthesis, or as a result of ribosome stalling. Its function is as follows. Catalyzes the release of premature peptidyl moieties from peptidyl-tRNA molecules trapped in stalled 50S ribosomal subunits, and thus maintains levels of free tRNAs and 50S ribosomes. The polypeptide is Peptidyl-tRNA hydrolase (Mycolicibacterium vanbaalenii (strain DSM 7251 / JCM 13017 / BCRC 16820 / KCTC 9966 / NRRL B-24157 / PYR-1) (Mycobacterium vanbaalenii)).